A 298-amino-acid polypeptide reads, in one-letter code: 4-diphosphocytidyl-2-C-methyl-D-erythritol kinase (298 aa).

Residue lysine 19 is part of the active site. 106-116 is a binding site for ATP; sequence PVASGIGGGSA. The active site involves aspartate 148.

It belongs to the GHMP kinase family. IspE subfamily.

It carries out the reaction 4-CDP-2-C-methyl-D-erythritol + ATP = 4-CDP-2-C-methyl-D-erythritol 2-phosphate + ADP + H(+). Its pathway is isoprenoid biosynthesis; isopentenyl diphosphate biosynthesis via DXP pathway; isopentenyl diphosphate from 1-deoxy-D-xylulose 5-phosphate: step 3/6. Its function is as follows. Catalyzes the phosphorylation of the position 2 hydroxy group of 4-diphosphocytidyl-2C-methyl-D-erythritol. The sequence is that of 4-diphosphocytidyl-2-C-methyl-D-erythritol kinase from Rhizobium leguminosarum bv. trifolii (strain WSM2304).